Consider the following 294-residue polypeptide: NADH-cytochrome b5 reductase 1 (294 aa).

Residues 18–38 traverse the membrane as a helical segment; that stretch reads PFIVFATVATIISAFIGYYFL. Residues 51–154 enclose the FAD-binding FR-type domain; the sequence is DEFQKFPLIE…RGPKGFFTYT (104 aa). FAD is bound by residues 134–149 and 160–192; these read AGKNVGEHIEIRGPKG and SFGMIAGGTGIAPMYQIITAILKNPEDKTKIHL.

This sequence belongs to the flavoprotein pyridine nucleotide cytochrome reductase family. In terms of assembly, monomer. Component of the 2-(3-amino-3-carboxypropyl)histidine synthase complex composed of DPH1, DPH2, DPH3 and a NADH-dependent reductase, predominantly CBR1. FAD serves as cofactor.

The protein resides in the mitochondrion outer membrane. The enzyme catalyses 2 Fe(III)-[cytochrome b5] + NADH = 2 Fe(II)-[cytochrome b5] + NAD(+) + H(+). It catalyses the reaction 2 Fe(3+)-[Dph3] + NADH = 2 Fe(2+)-[Dph3] + NAD(+) + H(+). It functions in the pathway protein modification; peptidyl-diphthamide biosynthesis. Its function is as follows. NADH-dependent reductase for DPH3 and cytochrome b5. Required for the first step of diphthamide biosynthesis, a post-translational modification of histidine which occurs in elongation factor 2. DPH1 and DPH2 transfer a 3-amino-3-carboxypropyl (ACP) group from S-adenosyl-L-methionine (SAM) to a histidine residue, the reaction is assisted by a reduction system comprising DPH3 and a NADH-dependent reductase, predominantly CBR1. By reducing DPH3, also involved in the formation of the tRNA wobble base modification mcm5s 2U (5-methoxycarbonylmethyl-2-thiouridine), mediated by the elongator complex. The cytochrome b5/NADH cytochrome b5 reductase electron transfer system supports the catalytic activity of several sterol biosynthetic enzymes. The protein is NADH-cytochrome b5 reductase 1 (CBR1) of Candida albicans (strain SC5314 / ATCC MYA-2876) (Yeast).